A 316-amino-acid polypeptide reads, in one-letter code: Transaldolase 2 (316 aa).

The active-site Schiff-base intermediate with substrate is Lys131.

This sequence belongs to the transaldolase family. Type 1 subfamily. As to quaternary structure, homodimer.

The protein resides in the cytoplasm. It carries out the reaction D-sedoheptulose 7-phosphate + D-glyceraldehyde 3-phosphate = D-erythrose 4-phosphate + beta-D-fructose 6-phosphate. The protein operates within carbohydrate degradation; pentose phosphate pathway; D-glyceraldehyde 3-phosphate and beta-D-fructose 6-phosphate from D-ribose 5-phosphate and D-xylulose 5-phosphate (non-oxidative stage): step 2/3. Its function is as follows. Transaldolase is important for the balance of metabolites in the pentose-phosphate pathway. This Salmonella paratyphi A (strain ATCC 9150 / SARB42) protein is Transaldolase 2.